The primary structure comprises 448 residues: B box and SPRY domain-containing protein (448 aa).

Low complexity predominate over residues Met1–Ser18. Residues Met1–Pro58 are disordered. Over residues Val19–Gly51 the composition is skewed to pro residues. The segment at Gln63–Glu111 adopts a B box-type zinc-finger fold. In terms of domain architecture, B30.2/SPRY spans Ser257–Cys448.

In terms of assembly, interacts with TRPV5 and TRPV6. Interacts with YWHAZ/14-3-3 protein zeta. Predominantly expressed in testis. Expressed in brain at low levels.

It is found in the cytoplasm. The protein localises to the membrane. Its function is as follows. May regulate epithelial calcium transport by inhibiting TRPV5 activity. This is B box and SPRY domain-containing protein (Bspry) from Rattus norvegicus (Rat).